Consider the following 91-residue polypeptide: Large ribosomal subunit protein uL23c (91 aa).

It belongs to the universal ribosomal protein uL23 family. As to quaternary structure, part of the 50S ribosomal subunit.

Its subcellular location is the plastid. It localises to the chloroplast. Its function is as follows. Binds to 23S rRNA. This chain is Large ribosomal subunit protein uL23c (rpl23), found in Anthoceros angustus (Hornwort).